A 326-amino-acid polypeptide reads, in one-letter code: Protein farnesyltransferase/geranylgeranyltransferase type-1 subunit alpha (326 aa).

PFTA repeat units follow at residues 55–89 (RSPR…ALNH), 90–124 (DLFE…KLGP), 126–160 (VAGR…ALGG), 161–194 (WEDE…QSPL), and 201–235 (MRES…DDKE).

The protein belongs to the protein prenyltransferase subunit alpha family. In terms of assembly, heterodimer of an alpha and a beta subunit. It depends on Mg(2+) as a cofactor.

It carries out the reaction L-cysteinyl-[protein] + (2E,6E)-farnesyl diphosphate = S-(2E,6E)-farnesyl-L-cysteinyl-[protein] + diphosphate. The enzyme catalyses geranylgeranyl diphosphate + L-cysteinyl-[protein] = S-geranylgeranyl-L-cysteinyl-[protein] + diphosphate. In terms of biological role, essential subunit of both the farnesyltransferase and the geranylgeranyltransferase complex. Contributes to the transfer of a farnesyl or geranylgeranyl moiety from farnesyl or geranylgeranyl diphosphate to a cysteine at the fourth position from the C-terminus of several proteins having the C-terminal sequence Cys-aliphatic-aliphatic-X. This Arabidopsis thaliana (Mouse-ear cress) protein is Protein farnesyltransferase/geranylgeranyltransferase type-1 subunit alpha (FTA).